Reading from the N-terminus, the 557-residue chain is Formate--tetrahydrofolate ligase 2 (557 aa).

Residue 66–73 coordinates ATP; the sequence is TPAGEGKT.

Belongs to the formate--tetrahydrofolate ligase family.

It carries out the reaction (6S)-5,6,7,8-tetrahydrofolate + formate + ATP = (6R)-10-formyltetrahydrofolate + ADP + phosphate. It functions in the pathway one-carbon metabolism; tetrahydrofolate interconversion. In Streptococcus pyogenes serotype M1, this protein is Formate--tetrahydrofolate ligase 2.